A 147-amino-acid chain; its full sequence is Small ribosomal subunit protein uS12 (147 aa).

Belongs to the universal ribosomal protein uS12 family. Part of the 30S ribosomal subunit.

In terms of biological role, with S4 and S5 plays an important role in translational accuracy. Located at the interface of the 30S and 50S subunits. This chain is Small ribosomal subunit protein uS12, found in Ignicoccus hospitalis (strain KIN4/I / DSM 18386 / JCM 14125).